The following is a 561-amino-acid chain: MDIKRTILIVALAIVSYVMVLKWNQDYGQAALPTQNTAASTANASLPDSVPAGNNGANADLPSVNAQNGTTGLAPAPVAVSKDLIQVKTDVLNLAIDPVGGDIVQLTLPKFPRRQDHPEIPFQLFDNGGERVYLAQSGLIGTDGPDRASGRPLYATEQKSYQLADGQDQLVVDLKFSENGVNYIKRFSLKRGEYDLTVSYLIDNQSAQAWSGNMFAQLKRDASSDPSSSTATGTATYLGAALWTASEPYKKVSMKDMDKGGLQENVAGGWVAWLQHYFVTAWIPSKSDNNAVQTRKDSQGNYIIGYTGPALNVPAGGKVETSAMLYAGPKIQSKLKELSPGLELTVDYGFLWFIAQPIFWLLQHIHSLLGNWGWSIIVLTMLIKGLFFPLSAASYRSMARMRAVAPKLAQLKERFGDDRQKMSQAMMELYKKEKINPLGGCLPILVQMPVFLALYWVLLESVEMRQAPWMLWITDLSIKDPFFILPIIMGATMFIQQRLNPTPPDPMQAKVMKMMPIIFTFFFLWFPAGLVLYWVVNNCLSIAQQWYITRSIEAATKKAAA.

Transmembrane regions (helical) follow at residues 7–27, 342–362, 368–388, 438–458, 469–489, and 516–536; these read ILIV…NQDY, LELT…FWLL, LLGN…GLFF, LGGC…YWVL, WMLW…PIIM, and PIIF…YWVV.

The protein belongs to the OXA1/ALB3/YidC family. Type 1 subfamily. In terms of assembly, interacts with the Sec translocase complex via SecD. Specifically interacts with transmembrane segments of nascent integral membrane proteins during membrane integration.

The protein localises to the cell inner membrane. Its function is as follows. Required for the insertion and/or proper folding and/or complex formation of integral membrane proteins into the membrane. Involved in integration of membrane proteins that insert both dependently and independently of the Sec translocase complex, as well as at least some lipoproteins. Aids folding of multispanning membrane proteins. This is Membrane protein insertase YidC from Pseudomonas entomophila (strain L48).